The chain runs to 730 residues: LisH domain-containing protein ARMC9 (730 aa).

Residues 7-39 (HESELLGLVKEYLDFAEFEDTLKTFSKECKVKG) enclose the LisH domain. Residues 205-242 (SNNKEMLQQLHQQLLEAERRAMAYLKRYNKMQADYHSL) adopt a coiled-coil conformation. S583 is modified (phosphoserine). The segment at 675–730 (QNAQQARNGCPRPIPVAQPDDYKEGKRGVAGRATPSSCKSAECAEPVLSSGAQKPK) is disordered.

Interacts with TOGARAM1, CCDC66, CEP104, CSPP1 and CEP290. Interacts with NDUFAF2.

Its subcellular location is the cytoplasm. The protein resides in the cytoskeleton. It localises to the cilium basal body. It is found in the cell projection. The protein localises to the cilium. Its subcellular location is the microtubule organizing center. The protein resides in the centrosome. It localises to the centriole. Functionally, involved in ciliogenesis. It is required for appropriate acetylation and polyglutamylation of ciliary microtubules, and regulation of cilium length. Acts as a positive regulator of hedgehog (Hh)signaling. May participate in the trafficking and/or retention of GLI2 and GLI3 proteins at the ciliary tip. This Rattus norvegicus (Rat) protein is LisH domain-containing protein ARMC9 (Armc9).